The chain runs to 392 residues: L-lactate dehydrogenase (392 aa).

Residues 1-380 (MIISASTDYR…GSDSLVTGSA (380 aa)) enclose the FMN hydroxy acid dehydrogenase domain. Tyr24 is a substrate binding site. Ser106 and Gln127 together coordinate FMN. Tyr129 provides a ligand contact to substrate. Thr155 provides a ligand contact to FMN. Substrate is bound at residue Arg164. Lys251 provides a ligand contact to FMN. Catalysis depends on His275, which acts as the Proton acceptor. Arg278 contacts substrate. An FMN-binding site is contributed by 306 to 330 (DSGVRNGLDVVRMIAMGADTILLGR).

It belongs to the FMN-dependent alpha-hydroxy acid dehydrogenase family. FMN is required as a cofactor.

The protein resides in the cell inner membrane. It carries out the reaction (S)-lactate + A = pyruvate + AH2. Catalyzes the conversion of L-lactate to pyruvate. Is coupled to the respiratory chain. This is L-lactate dehydrogenase from Chromohalobacter salexigens (strain ATCC BAA-138 / DSM 3043 / CIP 106854 / NCIMB 13768 / 1H11).